Here is a 184-residue protein sequence, read N- to C-terminus: Photosystem I assembly protein Ycf4 (184 aa).

Transmembrane regions (helical) follow at residues F22 to S42 and I57 to S77.

This sequence belongs to the Ycf4 family.

It is found in the plastid. It localises to the chloroplast thylakoid membrane. Seems to be required for the assembly of the photosystem I complex. The polypeptide is Photosystem I assembly protein Ycf4 (Platanus occidentalis (Sycamore)).